The primary structure comprises 116 residues: MRHQRRVPQLGRPADQRKALLRALTTELIRHGRITTTKARAKAVRAEAERMITLAKDGSLAARRRALGYLYDKQLVHSLFAQAPERYGDRQGGYTRIIRSVRRRGDNAELAVIELV.

It belongs to the bacterial ribosomal protein bL17 family. Part of the 50S ribosomal subunit. Contacts protein L32.

The polypeptide is Large ribosomal subunit protein bL17 (Thermosynechococcus vestitus (strain NIES-2133 / IAM M-273 / BP-1)).